We begin with the raw amino-acid sequence, 399 residues long: Elongation factor Tu (399 aa).

Residues 10-209 (KPHVNVGTIG…EVDKYIPTPQ (200 aa)) enclose the tr-type G domain. Residues 19-26 (GHVDHGKT) are G1. Position 19–26 (19–26 (GHVDHGKT)) interacts with GTP. Thr-26 provides a ligand contact to Mg(2+). A G2 region spans residues 60–64 (GITIA). Residues 81–84 (DCPG) are G3. GTP contacts are provided by residues 81–85 (DCPGH) and 136–139 (NKQD). Residues 136–139 (NKQD) form a G4 region. The interval 174-176 (SAL) is G5.

It belongs to the TRAFAC class translation factor GTPase superfamily. Classic translation factor GTPase family. EF-Tu/EF-1A subfamily. In terms of assembly, monomer.

It is found in the cytoplasm. It carries out the reaction GTP + H2O = GDP + phosphate + H(+). Its function is as follows. GTP hydrolase that promotes the GTP-dependent binding of aminoacyl-tRNA to the A-site of ribosomes during protein biosynthesis. The chain is Elongation factor Tu from Helicobacter hepaticus (strain ATCC 51449 / 3B1).